A 618-amino-acid chain; its full sequence is DNA mismatch repair protein MutL (618 aa).

A disordered region spans residues 371–401 (AREPATPRYSGGASGGSGGRQSVGGWSHAQP). Positions 382-392 (GASGGSGGRQS) are enriched in gly residues.

This sequence belongs to the DNA mismatch repair MutL/HexB family.

Functionally, this protein is involved in the repair of mismatches in DNA. It is required for dam-dependent methyl-directed DNA mismatch repair. May act as a 'molecular matchmaker', a protein that promotes the formation of a stable complex between two or more DNA-binding proteins in an ATP-dependent manner without itself being part of a final effector complex. The sequence is that of DNA mismatch repair protein MutL from Salmonella arizonae (strain ATCC BAA-731 / CDC346-86 / RSK2980).